We begin with the raw amino-acid sequence, 117 residues long: Large ribosomal subunit protein uL18 (117 aa).

It belongs to the universal ribosomal protein uL18 family. Part of the 50S ribosomal subunit; part of the 5S rRNA/L5/L18/L25 subcomplex. Contacts the 5S and 23S rRNAs.

Its function is as follows. This is one of the proteins that bind and probably mediate the attachment of the 5S RNA into the large ribosomal subunit, where it forms part of the central protuberance. The chain is Large ribosomal subunit protein uL18 from Azoarcus sp. (strain BH72).